The primary structure comprises 295 residues: 4-hydroxy-tetrahydrodipicolinate synthase (295 aa).

Thr47 is a binding site for pyruvate. The active-site Proton donor/acceptor is Tyr135. Lys163 (schiff-base intermediate with substrate) is an active-site residue. Position 206 (Ile206) interacts with pyruvate.

The protein belongs to the DapA family. Homodimer.

The protein resides in the cytoplasm. The catalysed reaction is L-aspartate 4-semialdehyde + pyruvate = (2S,4S)-4-hydroxy-2,3,4,5-tetrahydrodipicolinate + H2O + H(+). The protein operates within amino-acid biosynthesis; L-lysine biosynthesis via DAP pathway; (S)-tetrahydrodipicolinate from L-aspartate: step 3/4. Its activity is regulated as follows. Is not feedback inhibited by lysine. Its function is as follows. Catalyzes the condensation of (S)-aspartate-beta-semialdehyde [(S)-ASA] and pyruvate to 4-hydroxy-tetrahydrodipicolinate (HTPA). This chain is 4-hydroxy-tetrahydrodipicolinate synthase, found in Staphylococcus aureus (strain COL).